We begin with the raw amino-acid sequence, 4763 residues long: Nonribosomal peptide synthetase sidC (4763 aa).

The disordered stretch occupies residues 1–24 (MAGTANPADEGLTGPTETTNHINS). The span at 15 to 24 (PTETTNHINS) shows a compositional bias: polar residues. The tract at residues 296-815 (STVAEHSTLT…SSGKVDRNSI (520 aa)) is adenylation 1. One can recognise a Carrier 1 domain in the interval 853–930 (EKALELRTLV…GLLTLILNGK (78 aa)). Ser890 carries the O-(pantetheine 4'-phosphoryl)serine modification. Residues 1003-1396 (TRSYIYHSVI…DIIAFILQNP (394 aa)) form a condensation 1 region. Residues 1398-1951 (GDFENALLYT…AKTDRRALQA (554 aa)) form an adenylation 2 region. The region spanning 1979-2055 (LVASDAMEKI…DLARLCTSSS (77 aa)) is the Carrier 2 domain. Ser2016 carries the O-(pantetheine 4'-phosphoryl)serine modification. The interval 2092-2423 (TPIQESLLSE…HIHAREVRRM (332 aa)) is condensation 2. The interval 2556–3070 (ELNAREHPEW…MSGKANIKEL (515 aa)) is adenylation 3. The 77-residue stretch at 3099-3175 (RPLSSDEEAV…QLAQLPRKST (77 aa)) folds into the Carrier 3 domain. Ser3136 bears the O-(pantetheine 4'-phosphoryl)serine mark. Residues 3217-3626 (PLQEGLVARS…DDIALDSFSL (410 aa)) form a condensation 3 region. In terms of domain architecture, Carrier 4 spans 3647-3720 (SATETKIRDL…ALAEHVDERS (74 aa)). Ser3681 is subject to O-(pantetheine 4'-phosphoryl)serine. Positions 3761-4093 (TPLQAGMITR…SLFDTLFVFQ (333 aa)) are condensation 4. Residues 4204-4277 (PAHESIIRDV…GISARIISPV (74 aa)) enclose the Carrier 5 domain. Ser4238 carries the post-translational modification O-(pantetheine 4'-phosphoryl)serine. The tract at residues 4344–4593 (ERIDSGKLEE…PCLNVTPFTF (250 aa)) is condensation 5.

This sequence belongs to the NRP synthetase family.

The protein operates within siderophore biosynthesis. In terms of biological role, nonribosomal peptide synthase; part of the siderophore biosynthetic pathway. Aspergillus fumigatus produces four types of siderophores, low-molecular-mass iron chelators, including excreted fusarinine C (FsC) and triacetylfusarinine C (TAFC) for iron uptake; and intacellular ferricrocin (FC) for hyphal and hydroxyferricrocin (HFC) for conidial iron distribution and storage. TAFC consists of three N(2)-acetyl-N(5)-anhydromevalonyl-N(5)-hydroxyornithine residues cyclically linked by ester bonds; FC is a cyclic hexapeptide with the structure Gly-Ser-Gly-(N(5)-acetyl-N(5)-hydroxyornithine)x3. The biosynthesis of all four siderophores depends on the hydroxylation of ornithine, catalyzed by the monooxygenase sidA. Subsequently, the pathways for biosynthesis of extra- and intracellular siderophores split. For biosynthesis of extracellular siderophores, the transacylase sidF transfers anhydromevalonyl to N(5)-hydroxyornithine. The required anhydromevalonyl-CoA moiety is derived from mevalonate by CoA ligation and dehydration catalyzed by sidI and sidH respectively. The acetylation of N(5)-hydroxyornithine for FC biosynthesis involves the constitutively expressed sidL. FC is hydroxylated to HFC by an as yet uncharacterized enzyme during conidiation. Assembly of fusarinine C (FsC) and FC is catalyzed by two different nonribosomal peptide synthetases (NRPS), sidD and sidC respectively. Subsequently, sidG catalyzes N2-acetylation of FsC for forming TAFC. Both extra- and intracellular siderophores are crucial for growth during iron limitation and virulence. This chain is Nonribosomal peptide synthetase sidC, found in Aspergillus fumigatus (strain ATCC MYA-4609 / CBS 101355 / FGSC A1100 / Af293) (Neosartorya fumigata).